Consider the following 607-residue polypeptide: Cyclic-di-GMP receptor FimW (607 aa).

Residues 323-492 (ERTFQRTQGQ…GGTQMGIEMI (170 aa)) are pilZ-like domain. The RXXXR motif signature appears at 324 to 328 (RTFQR). The D/NXSXXG motif signature appears at 435–440 (NHSPGG). Over residues 568–582 (SQFEYRSAEPVNTPS) the composition is skewed to polar residues. A disordered region spans residues 568-607 (SQFEYRSAEPVNTPSDKPVTAPVARPPAGEEDFDSLWKSL).

Monomer in the absence of c-di-GMP. Forms dimers in the presence of c-di-GMP.

Its subcellular location is the cytoplasm. High-affinity cyclic-di-GMP binding protein that regulates type IV pili (T4P) elongation. Required for T4P-mediated surface attachment and walking motility during the early phases of surface colonization. Not required for twitching motility. Does not bind related nucleotides such as GMP, GDP, GTP or ATP. This is Cyclic-di-GMP receptor FimW from Pseudomonas aeruginosa (strain ATCC 15692 / DSM 22644 / CIP 104116 / JCM 14847 / LMG 12228 / 1C / PRS 101 / PAO1).